The primary structure comprises 692 residues: Follicle-stimulating hormone receptor (692 aa).

Positions 1–17 (MALLLVSLLAFLGSGSG) are cleaved as a signal peptide. Cystine bridges form between Cys18–Cys25 and Cys23–Cys32. An LRRNT domain is found at 18–46 (CHHWLCHCSNRVFLCQDSKVTEIPPDLPR). The Extracellular segment spans residues 18-365 (CHHWLCHCSN…EDIMGYNILR (348 aa)). LRR repeat units lie at residues 49-72 (IELRFVLTKLRVIPKGSFSGFGDL), 73-97 (EKIEISQNDVLEVIEADVFSNLPNL), 98-118 (HEIRIEKANNLLYINPEAFQN), 119-143 (LPSLRYLLISNTGIKHLPAFHKIQS), 144-169 (LQKVLLDIQDNINIHIIARNSFMGLS), 170-192 (FESVILWLNKNGIQEIHNCAFNG), 193-216 (TQLDELNLSDNNNLEELPDDVFQG), 217-240 (ASGPVVLDISRTKVYSLPNHGLEN), and 241-259 (LKKLRARSTYRLKKLPSLD). 2 N-linked (GlcNAc...) asparagine glycosylation sites follow: Asn191 and Asn199. 4 cysteine pairs are disulfide-bonded: Cys275-Cys345, Cys276-Cys292, Cys276-Cys355, and Cys292-Cys337. Residue Asn293 is glycosylated (N-linked (GlcNAc...) asparagine). Residue Tyr334 is modified to Sulfotyrosine. Residues 366 to 386 (VLIWFISILAITGNTTVLVVL) form a helical membrane-spanning segment. The Cytoplasmic segment spans residues 387-397 (TTSQYKLTVPR). Residues 398–420 (FLMCNLAFADLCIGIYLLLIASV) traverse the membrane as a helical segment. The Extracellular portion of the chain corresponds to 421–442 (DIHTKSQYHNYAIDWQTGAGCD). The cysteines at positions 441 and 516 are disulfide-linked. A helical membrane pass occupies residues 443–464 (AAGFFTVFASELSVYTLAAITL). At 465-484 (ERWHTITHAMQLECKVQLCH) the chain is on the cytoplasmic side. The helical transmembrane segment at 485-507 (AASIMVLGWAFAFAAALFPIFGI) threads the bilayer. The Extracellular segment spans residues 508–527 (SSYMKVSICLPMDIDSPLSQ). A helical membrane pass occupies residues 528–549 (LYVMALLVLNALAFVVICGCYT). Over 550 to 572 (HIYLTVRNPNIVSSSRDTKIAKR) the chain is Cytoplasmic. Residues 573 to 596 (MATLIFTDFLCMAPILFFAISASL) traverse the membrane as a helical segment. Residues 597-607 (KVPLITVSKAK) lie on the Extracellular side of the membrane. The helical transmembrane segment at 608 to 629 (ILLVLFYPINSCANPFLYAIFT) threads the bilayer. Residues 630–692 (KNFRRDFFVL…LVPLNHSVQN (63 aa)) are Cytoplasmic-facing.

It belongs to the G-protein coupled receptor 1 family. FSH/LSH/TSH subfamily. Homotrimer. Functions as a homotrimer binding the FSH hormone heterodimer composed of CGA and FSHB. Interacts with ARRB2. Interacts with APPL2; interaction is independent of follicle stimulating hormone stimulation. Post-translationally, N-glycosylated; indirectly required for FSH-binding, possibly via a conformational change that allows high affinity binding of hormone. Sulfated.

Its subcellular location is the cell membrane. G protein-coupled receptor for follitropin, the follicle-stimulating hormone. Through cAMP production activates the downstream PI3K-AKT and ERK1/ERK2 signaling pathways. This chain is Follicle-stimulating hormone receptor (Fshr), found in Mus musculus (Mouse).